Here is a 625-residue protein sequence, read N- to C-terminus: tRNA uridine 5-carboxymethylaminomethyl modification enzyme MnmG (625 aa).

13–18 (GGGHAG) is an FAD binding site. 273–287 (GPRYCPSIEDKVVRF) is an NAD(+) binding site.

The protein belongs to the MnmG family. As to quaternary structure, homodimer. Heterotetramer of two MnmE and two MnmG subunits. Requires FAD as cofactor.

It is found in the cytoplasm. Functionally, NAD-binding protein involved in the addition of a carboxymethylaminomethyl (cmnm) group at the wobble position (U34) of certain tRNAs, forming tRNA-cmnm(5)s(2)U34. This chain is tRNA uridine 5-carboxymethylaminomethyl modification enzyme MnmG, found in Methylococcus capsulatus (strain ATCC 33009 / NCIMB 11132 / Bath).